A 33-amino-acid chain; its full sequence is Protein YtiC (33 aa).

A helical membrane pass occupies residues 10-29 (FDMLSIYIIYKLIVSNNTWL).

The protein resides in the cell inner membrane. This Escherichia coli (strain K12) protein is Protein YtiC.